The chain runs to 625 residues: Endoglucanase 13 (625 aa).

Residues 1 to 34 form the signal peptide; it reads MAATMNKTPATTFLLIPAAASLVLLLAAAASVEA. Catalysis depends on Asp91, which acts as the Nucleophile. His427 is an active-site residue. N-linked (GlcNAc...) asparagine glycosylation occurs at Asn440. Active-site residues include Asp479 and Glu488. The tract at residues 509 to 530 is disordered; that stretch reads ADNTPEYTPAPNAPSPSNGGSP.

Belongs to the glycosyl hydrolase 9 (cellulase E) family.

The protein localises to the secreted. It carries out the reaction Endohydrolysis of (1-&gt;4)-beta-D-glucosidic linkages in cellulose, lichenin and cereal beta-D-glucans.. This chain is Endoglucanase 13 (GLU6), found in Oryza sativa subsp. indica (Rice).